The following is a 236-amino-acid chain: Phosphoribosylaminoimidazole-succinocarboxamide synthase (236 aa).

Belongs to the SAICAR synthetase family.

The enzyme catalyses 5-amino-1-(5-phospho-D-ribosyl)imidazole-4-carboxylate + L-aspartate + ATP = (2S)-2-[5-amino-1-(5-phospho-beta-D-ribosyl)imidazole-4-carboxamido]succinate + ADP + phosphate + 2 H(+). The protein operates within purine metabolism; IMP biosynthesis via de novo pathway; 5-amino-1-(5-phospho-D-ribosyl)imidazole-4-carboxamide from 5-amino-1-(5-phospho-D-ribosyl)imidazole-4-carboxylate: step 1/2. The sequence is that of Phosphoribosylaminoimidazole-succinocarboxamide synthase from Streptococcus equi subsp. zooepidemicus (strain H70).